The sequence spans 369 residues: p21-activated protein kinase-interacting protein 1-like (369 aa).

5 WD repeats span residues Ala-33–Ala-70, Gln-73–Ser-111, Ala-114–Ile-153, Thr-195–Glu-233, and Ala-236–Pro-278. Residues Ala-311 to Glu-369 form a disordered region. 2 stretches are compositionally biased toward basic residues: residues Lys-338 to Lys-350 and Gln-358 to Glu-369.

It is found in the nucleus. It localises to the nucleolus. Functionally, negatively regulates the PAK1 kinase. PAK1 is a member of the PAK kinase family, which has been shown to play a positive role in the regulation of signaling pathways involving MAPK8 and RELA. PAK1 exists as an inactive homodimer, which is activated by binding of small GTPases such as CDC42 to an N-terminal regulatory domain. PAK1IP1 also binds to the N-terminus of PAK1, and inhibits the specific activation of PAK1 by CDC42. May be involved in ribosomal large subunit assembly. The chain is p21-activated protein kinase-interacting protein 1-like (PAK1IP1) from Gallus gallus (Chicken).